Here is a 386-residue protein sequence, read N- to C-terminus: L-lactate dehydrogenase (386 aa).

Positions 1-380 (MIISASTDYR…TSDSLVQVTQ (380 aa)) constitute an FMN hydroxy acid dehydrogenase domain. Residue tyrosine 24 participates in substrate binding. The FMN site is built by serine 106 and glutamine 127. Tyrosine 129 serves as a coordination point for substrate. Threonine 155 lines the FMN pocket. Arginine 164 contributes to the substrate binding site. Lysine 251 provides a ligand contact to FMN. Histidine 275 functions as the Proton acceptor in the catalytic mechanism. Arginine 278 is a binding site for substrate. Residue 306–330 (DSGIRSGLDVVRMIALGADGVMLGR) participates in FMN binding.

This sequence belongs to the FMN-dependent alpha-hydroxy acid dehydrogenase family. It depends on FMN as a cofactor.

It localises to the cell inner membrane. The catalysed reaction is (S)-lactate + A = pyruvate + AH2. Catalyzes the conversion of L-lactate to pyruvate. Is coupled to the respiratory chain. This chain is L-lactate dehydrogenase, found in Pectobacterium atrosepticum (strain SCRI 1043 / ATCC BAA-672) (Erwinia carotovora subsp. atroseptica).